A 314-amino-acid polypeptide reads, in one-letter code: GDSL-like esterase Rv1075c (314 aa).

Positions methionine 1–alanine 21 are cleaved as a signal peptide. Residue serine 80 is the Nucleophile of the active site. Aspartate 244 acts as the Proton donor in catalysis. The active-site Proton acceptor is histidine 247. Residues isoleucine 276–glycine 314 form a disordered region. The segment covering threonine 293–proline 306 has biased composition (basic residues).

The protein belongs to the 'GDSL' lipolytic enzyme family.

The enzyme catalyses an acetyl ester + H2O = an aliphatic alcohol + acetate + H(+). It carries out the reaction a butanoate ester + H2O = an aliphatic alcohol + butanoate + H(+). It catalyses the reaction triacetin + H2O = diacetylglycerol + acetate + H(+). The catalysed reaction is 1,2,3-tributanoylglycerol + H2O = dibutanoylglycerol + butanoate + H(+). With respect to regulation, esterase activity is significantly inhibited by the serine modifier phenylmethylsulfonyl fluoride (PMSF). Completely inhibited by diethyl pyrocarbonate. Its function is as follows. Esterase that preferentially hydrolyzes short-chain fatty acids, particularly pNP-acetate (C2) and pNP-butyrate (C4). Also has weak activity with pNP-hexanoate (C6) and pNP-octanoate (C8). It can also hydrolyze short-chain tryglycerides such as triacetin and tributyrin. Important for intracellular survival. The sequence is that of GDSL-like esterase Rv1075c from Mycobacterium tuberculosis (strain ATCC 25618 / H37Rv).